Reading from the N-terminus, the 67-residue chain is MVKSLLFAIGYLIFLLVTRVNVINADICSHLGYACADDNECCDKFCKGLTPTTYGICNKKPYTYRQY.

Residues 1–25 form the signal peptide; the sequence is MVKSLLFAIGYLIFLLVTRVNVINA. Disulfide bonds link C28-C42, C35-C46, and C41-C57.

In terms of tissue distribution, abundantly expressed by teratocytes, which are extra-embryonic cells released by parasitoid wasps into their hosts during larval eclosion.

It is found in the secreted. Its function is as follows. This endoparasitoid wasp peptide has immununosuppressive, antimicrobial and insecticidal activities. Suppress cellular immunity which is detectable as a reduction of hemocyte encapsulation in the host. Shows moderate antifungal activity against C.albicans (MIC=4 ug/ml). In vivo, ingestion of this peptide (probably at excessive doses) increases larval mortality and reduces leaf consumption of D.saccharalis, a permissive host for C.flavipes. The sequence is that of Teratocyte protein CftICK-II from Cotesia flavipes (Parasitic wasp).